Reading from the N-terminus, the 240-residue chain is Transmembrane protein 65 (240 aa).

The N-terminal 61 residues, 1 to 61 (MSRLLPLLRS…RRLGTHPKKE (61 aa)), are a transit peptide targeting the mitochondrion. Topologically, residues 62–110 (PMEALNTAQGARDFIYSLHSTERSCLLKELHRFESIAIAQEKLEAPPPT) are cytoplasmic. A helical transmembrane segment spans residues 111 to 131 (PGQLRYVFIHNAIPFIGFGFL). Residues 132–142 (DNAIMIVAGTH) are Extracellular-facing. Residues 143-165 (IEMSIGIILGISTMAAAALGNLV) traverse the membrane as a helical segment. At 166–209 (SDLAGLGLAGYVEALASRLGLSIPDLTPKQVDMWQTRLSTHLGK) the chain is on the cytoplasmic side. A helical membrane pass occupies residues 210–230 (AVGVTIGCILGMFPLIFFGGG). The Extracellular segment spans residues 231 to 240 (EEDEKLETKS).

Monomer. Homodimer. Interacts with GJA1. Interacts weakly with DSP. Interacts with SCN1B. Predominantly expressed the ventricular tissue (at protein level).

The protein localises to the cell membrane. It localises to the mitochondrion inner membrane. Functionally, essential for maintaining proper cardiac intercalated disk (ICD) structure and function as well as cardiac conduction velocity in the heart. Its association with SCN1B is required for stabilizing the perinexus in the ICD and for localization of GJA1 and SCN5A to the ICD. May regulate the function of the gap junction protein GJA1 and may contribute to the stability and proper localization of GJA1 to cardiac intercalated disk thereby regulating gap junction communication. May also play a role in the regulation of mitochondrial respiration and mitochondrial DNA copy number maintenance. The chain is Transmembrane protein 65 (TMEM65) from Homo sapiens (Human).